The primary structure comprises 121 residues: Large ribosomal subunit protein uL18 (121 aa).

It belongs to the universal ribosomal protein uL18 family. Part of the 50S ribosomal subunit; part of the 5S rRNA/L5/L18/L25 subcomplex. Contacts the 5S and 23S rRNAs.

In terms of biological role, this is one of the proteins that bind and probably mediate the attachment of the 5S RNA into the large ribosomal subunit, where it forms part of the central protuberance. In Albidiferax ferrireducens (strain ATCC BAA-621 / DSM 15236 / T118) (Rhodoferax ferrireducens), this protein is Large ribosomal subunit protein uL18.